Reading from the N-terminus, the 45-residue chain is Monellin chain A (45 aa).

In terms of assembly, heterodimer of an A chain and a B chain.

In terms of biological role, taste-modifying protein; intensely sweet-tasting protein. The sequence is that of Monellin chain A from Dioscoreophyllum cumminsii (Serendipity berry).